Consider the following 271-residue polypeptide: Thiazole synthase (271 aa).

Lysine 104 acts as the Schiff-base intermediate with DXP in catalysis. Residues glycine 165, 192–193, and 214–215 contribute to the 1-deoxy-D-xylulose 5-phosphate site; these read AG and NT.

This sequence belongs to the ThiG family. Homotetramer. Forms heterodimers with either ThiH or ThiS.

It localises to the cytoplasm. The enzyme catalyses [ThiS sulfur-carrier protein]-C-terminal-Gly-aminoethanethioate + 2-iminoacetate + 1-deoxy-D-xylulose 5-phosphate = [ThiS sulfur-carrier protein]-C-terminal Gly-Gly + 2-[(2R,5Z)-2-carboxy-4-methylthiazol-5(2H)-ylidene]ethyl phosphate + 2 H2O + H(+). It participates in cofactor biosynthesis; thiamine diphosphate biosynthesis. Functionally, catalyzes the rearrangement of 1-deoxy-D-xylulose 5-phosphate (DXP) to produce the thiazole phosphate moiety of thiamine. Sulfur is provided by the thiocarboxylate moiety of the carrier protein ThiS. In vitro, sulfur can be provided by H(2)S. The polypeptide is Thiazole synthase (Burkholderia lata (strain ATCC 17760 / DSM 23089 / LMG 22485 / NCIMB 9086 / R18194 / 383)).